The chain runs to 1046 residues: UDP-N-acetylglucosamine--peptide N-acetylglucosaminyltransferase 110 kDa subunit (1046 aa).

Alanine 2 is subject to N-acetylalanine. Serine 3 and serine 4 each carry phosphoserine; by GSK3-beta; alternate. 2 O-linked (GlcNAc) serine; alternate glycosylation sites follow: serine 3 and serine 4. Phosphoserine is present on serine 20. TPR repeat units follow at residues 21–54, 89–122, 123–156, 157–190, 191–224, 225–258, 259–292, 293–326, 327–360, 361–394, 395–428, and 429–462; these read FQGL…EPDN, AEAY…KPDF, IDGY…NPDL, YCVR…QPNF, AVAW…DPNF, LDAY…SPNH, AVVH…QPHF, PDAY…CPTH, ADSL…FPEF, AAAH…SPTF, ADAY…NPAF, and ADAH…KPDF. A glycan (O-linked (GlcNAc) serine; by autocatalysis) is linked at serine 399. Threonine 454 carries the post-translational modification Phosphothreonine. The TPR 13; truncated repeat unit spans residues 463 to 473; that stretch reads PDAYCNLAHCL. The DFP motif motif lies at 464-466; it reads DAY. Residues 487 to 503 carry the Nuclear localization signal motif; the sequence is KKLVSIVADQLEKNRLP. The Proton acceptor role is filled by histidine 508. Residues glutamine 849, lysine 852, 906-908, 911-914, 930-932, and aspartate 935 each bind UDP; these read APK, HVRR, and HTT. Tyrosine 989 is subject to Phosphotyrosine. Positions 991 to 1010 are required for phosphatidylinositol 3,4,5-triphosphate binding; it reads KKIRGKVWKQRISSPLFNTK.

This sequence belongs to the glycosyltransferase 41 family. O-GlcNAc transferase subfamily. Monomer; may exist in different oligomerization states in cells. Homotrimer, oligomerizes via TPR repeats 6 and 7. Trimerization is not necessary for activity in vitro, however it increases affinity for UDP-GlcNAc. Component of a THAP1/THAP3-HCFC1-OGT complex. Component of the NSL complex at least composed of MOF/KAT8, KANSL1, KANSL2, KANSL3, MCRS1, PHF20, OGT1/OGT, WDR5 and HCFC1. Found in a complex with KIF5B, RHOT1, RHOT2 and TRAK1. Found in a complex composed of at least SINHCAF, SIN3A, HDAC1, SAP30, RBBP4, OGT and TET1. Component of a complex composed of KMT2E/MLL5, OGT and USP7; the complex stabilizes KMT2E/MLL5, preventing KMT2E/MLL5 ubiquitination and proteasomal-mediated degradation. Interacts (via TPRs 1-6) with SIN3A; the interaction mediates transcriptional repression in parallel with histone deacetylase. Interacts (via TPR 5-6) with TET1, TET2 and TET3. Interacts (via TPR repeats 6 and 7) with ATXN10. Interacts with NSD2. Interacts with PROSER1; this interaction mediates TET2 O-GlcNAcylation and stability by promoting the interaction between OGT and TET2. Post-translationally, ubiquitinated by the SCF(FBXO31) complex, leading to its proteasomal degradation. In terms of processing, phosphorylation on Ser-3 or Ser-4 by GSK3-beta positively regulates its activity. Phosphorylation at Thr-454 by AMPK promotes nuclear localization. Glycosylated via autocatalysis; O-GlcNAcylation at Ser-399 promotes nuclear localization.

Its subcellular location is the nucleus. The protein resides in the cytoplasm. It catalyses the reaction L-seryl-[protein] + UDP-N-acetyl-alpha-D-glucosamine = 3-O-(N-acetyl-beta-D-glucosaminyl)-L-seryl-[protein] + UDP + H(+). The catalysed reaction is L-threonyl-[protein] + UDP-N-acetyl-alpha-D-glucosamine = 3-O-(N-acetyl-beta-D-glucosaminyl)-L-threonyl-[protein] + UDP + H(+). It participates in protein modification; protein glycosylation. Its activity is regulated as follows. Inhibited by UDP. Its function is as follows. Catalyzes the transfer of a single N-acetylglucosamine from UDP-GlcNAc to a serine or threonine residue in cytoplasmic and nuclear proteins resulting in their modification with a beta-linked N-acetylglucosamine (O-GlcNAc). Glycosylates a large and diverse number of proteins including histone H2B, AKT1, AMPK, ATG4B, CAPRIN1, EZH2, FNIP1, GSDMD, KRT7, LMNA, LMNB1, LMNB2, RPTOR, HOXA1, PFKL, KMT2E/MLL5, MAPT/TAU, TET2, RBL2, RET, NOD2 and HCFC1. Can regulate their cellular processes via cross-talk between glycosylation and phosphorylation or by affecting proteolytic processing. Involved in insulin resistance in muscle and adipocyte cells via glycosylating insulin signaling components and inhibiting the 'Thr-308' phosphorylation of AKT1, enhancing IRS1 phosphorylation and attenuating insulin signaling. Involved in glycolysis regulation by mediating glycosylation of 6-phosphofructokinase PFKL, inhibiting its activity. Plays a key role in chromatin structure by mediating O-GlcNAcylation of 'Ser-112' of histone H2B: recruited to CpG-rich transcription start sites of active genes via its interaction with TET proteins (TET1, TET2 or TET3). As part of the NSL complex indirectly involved in acetylation of nucleosomal histone H4 on several lysine residues. O-GlcNAcylation of 'Ser-75' of EZH2 increases its stability, and facilitating the formation of H3K27me3 by the PRC2/EED-EZH2 complex. Stabilizes KMT2E/MLL5 by mediating its glycosylation, thereby preventing KMT2E/MLL5 ubiquitination. Regulates circadian oscillation of the clock genes and glucose homeostasis in the liver. Stabilizes clock proteins BMAL1 and CLOCK through O-glycosylation, which prevents their ubiquitination and subsequent degradation. Promotes the CLOCK-BMAL1-mediated transcription of genes in the negative loop of the circadian clock such as PER1/2 and CRY1/2. O-glycosylates HCFC1 and regulates its proteolytic processing and transcriptional activity. Component of a THAP1/THAP3-HCFC1-OGT complex that is required for the regulation of the transcriptional activity of RRM1. Regulates mitochondrial motility in neurons by mediating glycosylation of TRAK1. Promotes autophagy by mediating O-glycosylation of ATG4B. Acts as a regulator of mTORC1 signaling by mediating O-glycosylation of RPTOR and FNIP1: O-GlcNAcylation of RPTOR in response to glucose sufficiency promotes activation of the mTORC1 complex. Functionally, catalyzes the transfer of a single N-acetylglucosamine from UDP-GlcNAc to a serine or threonine residue. Acts on cytoplasmic and nuclear proteins resulting in their modification with a beta-linked N-acetylglucosamine (O-GlcNAc). Glycosylates a large and diverse number of proteins including histone H2B, AKT1, ATG4B, EZH2, PFKL, KMT2E/MLL5, MAPT/TAU, NOD2 and HCFC1. Can regulate their cellular processes via cross-talk between glycosylation and phosphorylation or by affecting proteolytic processing. Probably by glycosylating KMT2E/MLL5, stabilizes KMT2E/MLL5 by preventing its ubiquitination. Involved in insulin resistance in muscle and adipocyte cells via glycosylating insulin signaling components and inhibiting the 'Thr-308' phosphorylation of AKT1, enhancing IRS1 phosphorylation and attenuating insulin signaling. Involved in glycolysis regulation by mediating glycosylation of 6-phosphofructokinase PFKL, inhibiting its activity. Component of a THAP1/THAP3-HCFC1-OGT complex that is required for the regulation of the transcriptional activity of RRM1. Plays a key role in chromatin structure by mediating O-GlcNAcylation of 'Ser-112' of histone H2B: recruited to CpG-rich transcription start sites of active genes via its interaction with TET proteins (TET1, TET2 or TET3). As part of the NSL complex indirectly involved in acetylation of nucleosomal histone H4 on several lysine residues. O-GlcNAcylation of 'Ser-75' of EZH2 increases its stability, and facilitating the formation of H3K27me3 by the PRC2/EED-EZH2 complex. Regulates circadian oscillation of the clock genes and glucose homeostasis in the liver. Stabilizes clock proteins BMAL1 and CLOCK through O-glycosylation, which prevents their ubiquitination and subsequent degradation. Promotes the CLOCK-BMAL1-mediated transcription of genes in the negative loop of the circadian clock such as PER1/2 and CRY1/2. O-glycosylates HCFC1 and regulates its proteolytic processing and transcriptional activity. Regulates mitochondrial motility in neurons by mediating glycosylation of TRAK1. Glycosylates HOXA1. O-glycosylates FNIP1. Promotes autophagy by mediating O-glycosylation of ATG4B. The protein is UDP-N-acetylglucosamine--peptide N-acetylglucosaminyltransferase 110 kDa subunit (OGT) of Oryctolagus cuniculus (Rabbit).